The sequence spans 251 residues: Triosephosphate isomerase (251 aa).

9–11 (NWK) provides a ligand contact to substrate. His95 (electrophile) is an active-site residue. Catalysis depends on Glu167, which acts as the Proton acceptor. Residues Gly173, Ser212, and 233-234 (GG) contribute to the substrate site.

This sequence belongs to the triosephosphate isomerase family. As to quaternary structure, homodimer.

The protein resides in the cytoplasm. It catalyses the reaction D-glyceraldehyde 3-phosphate = dihydroxyacetone phosphate. The protein operates within carbohydrate biosynthesis; gluconeogenesis. It functions in the pathway carbohydrate degradation; glycolysis; D-glyceraldehyde 3-phosphate from glycerone phosphate: step 1/1. Its function is as follows. Involved in the gluconeogenesis. Catalyzes stereospecifically the conversion of dihydroxyacetone phosphate (DHAP) to D-glyceraldehyde-3-phosphate (G3P). The protein is Triosephosphate isomerase of Pseudomonas fluorescens (strain ATCC BAA-477 / NRRL B-23932 / Pf-5).